The chain runs to 1206 residues: DNA-directed RNA polymerase subunit beta' (1206 aa).

Residues cysteine 60, cysteine 62, cysteine 75, and cysteine 78 each coordinate Zn(2+). Residues aspartate 449, aspartate 451, and aspartate 453 each contribute to the Mg(2+) site. Zn(2+) contacts are provided by cysteine 818, cysteine 892, cysteine 899, and cysteine 902.

Belongs to the RNA polymerase beta' chain family. The RNAP catalytic core consists of 2 alpha, 1 beta, 1 beta' and 1 omega subunit. When a sigma factor is associated with the core the holoenzyme is formed, which can initiate transcription. Mg(2+) is required as a cofactor. Requires Zn(2+) as cofactor.

The enzyme catalyses RNA(n) + a ribonucleoside 5'-triphosphate = RNA(n+1) + diphosphate. DNA-dependent RNA polymerase catalyzes the transcription of DNA into RNA using the four ribonucleoside triphosphates as substrates. This chain is DNA-directed RNA polymerase subunit beta', found in Halalkalibacterium halodurans (strain ATCC BAA-125 / DSM 18197 / FERM 7344 / JCM 9153 / C-125) (Bacillus halodurans).